Reading from the N-terminus, the 404-residue chain is MDKVKKAVLAFSGGLDTSVILKWLQDTYQCEVVTFTADIGQGEEIEPARAKAVQFGIREIFIEDLREEFVRDYVFPMFRANTIYEGEYLLGTSIARPLIAKRQVEIAQQTGADAVSHGATGKGNDQVRFELGYYALQPDIRVIAPWREWDLTSREKLLTYAEKQGIPIEMKQKAGSPYSMDANLLHISYEGRALEDPAAEPEESMWRWTVSPETAPSEPEYLDLEYERGDIVALNGERLSPAAILTRLNQLGGKHGIGRLDLVENRYVGMKSRGCYETPGGTIMLRAHRAIESITLDREVAHLKDDLMPRYAALIYNGYWWSPERKLLQVLIDESQVNVNGRVRVKLYKGNVMVVGRDSRTDSLFDPDIATFEEDGGAYHQADAAGFIKLNALRMRIAKALRRC.

ATP-binding positions include 10–18 (AFSGGLDTS) and A37. Residues Y88 and S93 each contribute to the L-citrulline site. An ATP-binding site is contributed by G118. L-aspartate is bound by residues T120, N124, and D125. An L-citrulline-binding site is contributed by N124. Residues R128, S179, S188, E264, and Y276 each coordinate L-citrulline.

It belongs to the argininosuccinate synthase family. Type 1 subfamily. In terms of assembly, homotetramer.

Its subcellular location is the cytoplasm. The catalysed reaction is L-citrulline + L-aspartate + ATP = 2-(N(omega)-L-arginino)succinate + AMP + diphosphate + H(+). Its pathway is amino-acid biosynthesis; L-arginine biosynthesis; L-arginine from L-ornithine and carbamoyl phosphate: step 2/3. The protein is Argininosuccinate synthase of Nitrosomonas europaea (strain ATCC 19718 / CIP 103999 / KCTC 2705 / NBRC 14298).